The primary structure comprises 272 residues: Interleukin-2 receptor subunit alpha (272 aa).

Positions 1–21 (MDPYLLMWGLLTFITVPGCQA) are cleaved as a signal peptide. A Sushi 1 domain is found at 22–84 (ELCDDDPPKI…SWDNQCQCTS (63 aa)). Over 22-240 (ELCDDDPPKI…ETFIFTTEYQ (219 aa)) the chain is Extracellular. Disulfide bonds link C24/C67, C49/C80, and C51/C82. Residues N70 and N89 are each glycosylated (N-linked (GlcNAc...) asparagine). The span at 87-98 (ARNTTKQVTPQP) shows a compositional bias: polar residues. The interval 87 to 109 (ARNTTKQVTPQPEEQKERKTTEM) is disordered. A Sushi 2 domain is found at 123–186 (GHCREPPPWE…WTQPQLICTG (64 aa)). Disulfide bonds link C125-C168 and C152-C184. The segment at 186-213 (GETEPSQFPGEEEPQASPDGLPESETSR) is disordered. Residues 241-259 (VAVAGCVFLLISVLLLSGL) traverse the membrane as a helical segment. At 260-272 (TWQRRQRKNRRTI) the chain is on the cytoplasmic side.

In terms of assembly, non-covalent dimer of an alpha and a beta subunit. IL2R exists in 3 different forms: a high affinity dimer, an intermediate affinity monomer (beta subunit), and a low affinity monomer (alpha subunit). The high and intermediate affinity forms also associate with a gamma subunit.

It localises to the membrane. Functionally, receptor for interleukin-2. The receptor is involved in the regulation of immune tolerance by controlling regulatory T cells (TREGs) activity. TREGs suppress the activation and expansion of autoreactive T-cells. This is Interleukin-2 receptor subunit alpha (IL2RA) from Macaca mulatta (Rhesus macaque).